Here is a 501-residue protein sequence, read N- to C-terminus: Type II methyltransferase M.BsuBI (501 aa).

This sequence belongs to the N(4)/N(6)-methyltransferase family.

It catalyses the reaction a 2'-deoxyadenosine in DNA + S-adenosyl-L-methionine = an N(6)-methyl-2'-deoxyadenosine in DNA + S-adenosyl-L-homocysteine + H(+). In terms of biological role, a beta subtype methylase that recognizes the double-stranded sequence 5'-CTGCAG-3', methylates A-5 on both strands, and protects the DNA from cleavage by the BsuBI endonuclease. The protein is Type II methyltransferase M.BsuBI (hsdBM) of Bacillus subtilis.